The sequence spans 606 residues: Kelch-like protein 26 (606 aa).

The span at 1 to 19 shows a compositional bias: low complexity; it reads MAESGGSSGSSQSPERPSS. The interval 1–20 is disordered; sequence MAESGGSSGSSQSPERPSSL. Ala2 bears the N-acetylalanine mark. The BTB domain maps to 54–121; sequence LDVVLTVNSE…AYSAEVTLDL (68 aa). Positions 156–257 constitute a BACK domain; that stretch reads CLHIGQMATT…QPAELVDSVQ (102 aa). Kelch repeat units lie at residues 301 to 352, 353 to 404, 406 to 451, 452 to 499, 501 to 550, and 552 to 599; these read SLVA…VLDN, FVYV…ALGG, LYAT…AAAG, RLYI…GAAG, IYAL…LLER, and IYIV…AVLL. Ser430 is subject to Phosphoserine.

In terms of biological role, may play a role in endo(sarco)plasmic reticulum (ER/SR) mitochondrial signaling. May be part of the ubiquitin-proteasome system (UPS) and affect ubiquitination and degradation of target substrates in cardiomyocytes. This chain is Kelch-like protein 26 (Klhl26), found in Mus musculus (Mouse).